We begin with the raw amino-acid sequence, 264 residues long: uncharacterized protein (264 aa).

Residues E235–T264 form a disordered region. Positions S237 to I247 are enriched in acidic residues.

This is an uncharacterized protein from Acanthamoeba polyphaga mimivirus (APMV).